The sequence spans 548 residues: Glucose-6-phosphate isomerase 1 (548 aa).

The active-site Proton donor is E353. Active-site residues include H384 and K512.

Belongs to the GPI family.

Its subcellular location is the cytoplasm. It carries out the reaction alpha-D-glucose 6-phosphate = beta-D-fructose 6-phosphate. The protein operates within carbohydrate biosynthesis; gluconeogenesis. Its pathway is carbohydrate degradation; glycolysis; D-glyceraldehyde 3-phosphate and glycerone phosphate from D-glucose: step 2/4. In terms of biological role, catalyzes the reversible isomerization of glucose-6-phosphate to fructose-6-phosphate. This Neisseria meningitidis serogroup A / serotype 4A (strain DSM 15465 / Z2491) protein is Glucose-6-phosphate isomerase 1.